We begin with the raw amino-acid sequence, 393 residues long: MANDFLFTSESVSEGHPDKVADQISDAILDAIFREDPRSRVAAETLTNTGLVVLAGEITTNAHVDYIQVARDTIKRIGYDNTDYGIDYKGCAVLVAYDKQSNDIAQGVDHASDDHLNTGAGDQGLMFGYACDETPELMPAPIYYAHRLVERQAQLRKDGRLPFLRPDAKSQVTMRYVDGKPHSIDTVVLSTQHHPDQSETATRMKASFIEAVIEEIIKPVLPKEWLQETKYLINPTGRFVIGGPQGDCGLTGRKIIVDTYGGACPHGGGAFSGKDPTKVDRSAAYAARYVAKNIVAAGLARQCQIQVSYAIGVARPINVTVYTEGTGVIPDEKIAALVQEHFDLRPKGIIQMLDLLRPIYEKTAAYGHFGREEPEFTWEKTDKAAALRAAAGL.

His-16 contributes to the ATP binding site. Asp-18 provides a ligand contact to Mg(2+). Glu-44 contacts K(+). Glu-57 and Gln-100 together coordinate L-methionine. A flexible loop region spans residues 100 to 110 (QSNDIAQGVDH). ATP-binding positions include 167–169 (DAK), 238–239 (RF), Asp-247, 253–254 (RK), Ala-270, and Lys-274. Residue Asp-247 participates in L-methionine binding. Lys-278 lines the L-methionine pocket.

This sequence belongs to the AdoMet synthase family. As to quaternary structure, homotetramer; dimer of dimers. Mg(2+) is required as a cofactor. Requires K(+) as cofactor.

It localises to the cytoplasm. It catalyses the reaction L-methionine + ATP + H2O = S-adenosyl-L-methionine + phosphate + diphosphate. It participates in amino-acid biosynthesis; S-adenosyl-L-methionine biosynthesis; S-adenosyl-L-methionine from L-methionine: step 1/1. Its function is as follows. Catalyzes the formation of S-adenosylmethionine (AdoMet) from methionine and ATP. The overall synthetic reaction is composed of two sequential steps, AdoMet formation and the subsequent tripolyphosphate hydrolysis which occurs prior to release of AdoMet from the enzyme. This chain is S-adenosylmethionine synthase, found in Paracidovorax citrulli (strain AAC00-1) (Acidovorax citrulli).